The following is a 128-amino-acid chain: MYDNLKSLGITQPEEIDRYSLRQEANNDILKIYFRKDKGEFFAKSVKFKYPRQRKTILSDNDSQGMREISEISPNLRYVIEELDRLCLRDRQEEDLKRKILDDLRHLESVVANKIAEIEADLEKLTGK.

Belongs to the UPF0325 family.

The sequence is that of UPF0325 protein NT01EI_0832 from Edwardsiella ictaluri (strain 93-146).